The sequence spans 1607 residues: Thrombospondin type-1 domain-containing protein 7B (1607 aa).

The first 31 residues, 1-31 (MFLRSDLAVTHWVSRSMRKLFLVLSLLLSQA), serve as a signal peptide directing secretion. Residues 32–1556 (AHLEGRKDNQ…QPLDPDGRVK (1525 aa)) are Extracellular-facing. 18 TSP type-1 domains span residues 40–98 (NQFL…RVCD), 102–177 (DLFQ…IPCP), 179–233 (DCVV…VSCP), 336–392 (DCET…IAEG), 399–482 (PRYS…VPCS), 484–543 (DCIV…PMCH), 601–661 (DCVV…HSCT), 662–735 (QLYW…LPCK), 737–796 (DCLV…SLCP), 797–869 (SYRW…IPCR), 871–924 (DCTF…CPCD), 925–999 (TFMS…IPCP), 1001–1126 (DCKL…LLCP), 1128–1182 (ECVM…ENCF), 1183–1246 (QFQY…VECV), 1248–1303 (NCQL…TPCY), 1304–1369 (SWVL…VPCP), and 1371–1432 (DCHI…GKCY). Asparagine 150 and asparagine 219 each carry an N-linked (GlcNAc...) asparagine glycan. Intrachain disulfides connect cysteine 411/cysteine 477, cysteine 431/cysteine 481, and cysteine 442/cysteine 466. 3 cysteine pairs are disulfide-bonded: cysteine 602–cysteine 643, cysteine 613–cysteine 617, and cysteine 655–cysteine 660. Residue asparagine 683 is glycosylated (N-linked (GlcNAc...) asparagine). Disulfide bonds link cysteine 738-cysteine 779, cysteine 749-cysteine 753, and cysteine 789-cysteine 795. N-linked (GlcNAc...) asparagine glycosylation occurs at asparagine 757. N-linked (GlcNAc...) asparagine glycosylation occurs at asparagine 842. Asparagine 933 carries N-linked (GlcNAc...) asparagine glycosylation. 5 disulfide bridges follow: cysteine 937/cysteine 994, cysteine 960/cysteine 998, cysteine 971/cysteine 984, cysteine 1002/cysteine 1039, and cysteine 1013/cysteine 1017. Asparagine 985 carries an N-linked (GlcNAc...) asparagine glycan. Asparagine 1105 is a glycosylation site (N-linked (GlcNAc...) asparagine). A disulfide bridge links cysteine 1121 with cysteine 1125. Asparagine 1187 and asparagine 1199 each carry an N-linked (GlcNAc...) asparagine glycan. 3 disulfides stabilise this stretch: cysteine 1249–cysteine 1287, cysteine 1260–cysteine 1264, and cysteine 1297–cysteine 1302. 2 N-linked (GlcNAc...) asparagine glycosylation sites follow: asparagine 1309 and asparagine 1335. 3 disulfides stabilise this stretch: cysteine 1372–cysteine 1416, cysteine 1383–cysteine 1387, and cysteine 1426–cysteine 1431. Residues asparagine 1457 and asparagine 1525 are each glycosylated (N-linked (GlcNAc...) asparagine). A helical membrane pass occupies residues 1557 to 1577 (MWVYGVSGGSFLIMIFLVFTS). Residues 1578 to 1607 (YLVCKKPKPHQSTPRHQKPLTLAYDGDLDM) are Cytoplasmic-facing.

The protein resides in the membrane. The polypeptide is Thrombospondin type-1 domain-containing protein 7B (Mus musculus (Mouse)).